The following is a 186-amino-acid chain: Ribosome-recycling factor (186 aa).

This sequence belongs to the RRF family.

The protein localises to the cytoplasm. In terms of biological role, responsible for the release of ribosomes from messenger RNA at the termination of protein biosynthesis. May increase the efficiency of translation by recycling ribosomes from one round of translation to another. This Maricaulis maris (strain MCS10) (Caulobacter maris) protein is Ribosome-recycling factor.